A 425-amino-acid chain; its full sequence is Serine--tRNA ligase (425 aa).

Residue 231–233 (TAE) coordinates L-serine. 262-264 (RSE) is a binding site for ATP. Glu285 is an L-serine binding site. 349–352 (EISS) provides a ligand contact to ATP. L-serine is bound at residue Ser385.

The protein belongs to the class-II aminoacyl-tRNA synthetase family. Type-1 seryl-tRNA synthetase subfamily. As to quaternary structure, homodimer. The tRNA molecule binds across the dimer.

It localises to the cytoplasm. It carries out the reaction tRNA(Ser) + L-serine + ATP = L-seryl-tRNA(Ser) + AMP + diphosphate + H(+). The enzyme catalyses tRNA(Sec) + L-serine + ATP = L-seryl-tRNA(Sec) + AMP + diphosphate + H(+). It functions in the pathway aminoacyl-tRNA biosynthesis; selenocysteinyl-tRNA(Sec) biosynthesis; L-seryl-tRNA(Sec) from L-serine and tRNA(Sec): step 1/1. Catalyzes the attachment of serine to tRNA(Ser). Is also able to aminoacylate tRNA(Sec) with serine, to form the misacylated tRNA L-seryl-tRNA(Sec), which will be further converted into selenocysteinyl-tRNA(Sec). This Bacillus subtilis (strain 168) protein is Serine--tRNA ligase.